The following is a 328-amino-acid chain: P2Y purinoceptor 6 (328 aa).

At 1 to 27 the chain is on the extracellular side; it reads MEQDNGTIQAPGLPPTTCVYREDFKRL. N-linked (GlcNAc...) asparagine glycosylation is present at asparagine 5. Residues 28–48 form a helical membrane-spanning segment; that stretch reads LLTPVYSVVLVVGLPLNICVI. Residues 49–62 lie on the Cytoplasmic side of the membrane; sequence AQICASRRTLTRSA. A helical membrane pass occupies residues 63–83; it reads VYTLNLALADLMYACSLPLLI. At 84–101 the chain is on the extracellular side; that stretch reads YNYARGDHWPFGDLACRF. A disulfide bond links cysteine 99 and cysteine 177. A helical membrane pass occupies residues 102–122; the sequence is VRFLFYANLHGSILFLTCISF. Residues 123-144 are Cytoplasmic-facing; sequence QRYLGICHPLASWHKRGGRRAA. A helical membrane pass occupies residues 145–165; that stretch reads WVVCGVVWLAVTAQCLPTAVF. At 166 to 194 the chain is on the extracellular side; sequence AATGIQRNRTVCYDLSPPILSTRYLPYGM. An N-linked (GlcNAc...) asparagine glycan is attached at asparagine 173. A helical membrane pass occupies residues 195 to 215; sequence ALTVIGFLLPFIALLACYCRM. At 216–236 the chain is on the cytoplasmic side; it reads ARRLCRQDGPAGPVAQERRSK. The chain crosses the membrane as a helical span at residues 237-257; the sequence is AARMAVVVAAVFAISFLPFHI. The Extracellular portion of the chain corresponds to 258–280; the sequence is TKTAYLAVRSTPGVSCPVLETFA. The helical transmembrane segment at 281-303 threads the bilayer; it reads AAYKGTRPFASVNSVLDPILFYF. The Cytoplasmic segment spans residues 304 to 328; that stretch reads TQQKFRRQPHDLLQRLTAKWQRQRV.

It belongs to the G-protein coupled receptor 1 family.

The protein localises to the cell membrane. Receptor for extracellular UTP &gt; ADP = 2-methylthio-ATP &gt; ADP-beta-S &gt; ATP = ATP-gamma-S. The activity of this receptor is mediated by G proteins which activate a phosphatidylinositol-calcium second messenger system. Functionally coupled to phospholipase C. This Mus musculus (Mouse) protein is P2Y purinoceptor 6 (P2ry6).